The chain runs to 166 residues: NAD(P)H-quinone oxidoreductase subunit I, chloroplastic (166 aa).

4Fe-4S ferredoxin-type domains follow at residues 55–84 (GRIH…VDWK) and 95–124 (LNYS…MTEE). Residues cysteine 64, cysteine 67, cysteine 70, cysteine 74, cysteine 104, cysteine 107, cysteine 110, and cysteine 114 each contribute to the [4Fe-4S] cluster site.

Belongs to the complex I 23 kDa subunit family. In terms of assembly, NDH is composed of at least 16 different subunits, 5 of which are encoded in the nucleus. [4Fe-4S] cluster serves as cofactor.

The protein resides in the plastid. It is found in the chloroplast thylakoid membrane. It carries out the reaction a plastoquinone + NADH + (n+1) H(+)(in) = a plastoquinol + NAD(+) + n H(+)(out). The enzyme catalyses a plastoquinone + NADPH + (n+1) H(+)(in) = a plastoquinol + NADP(+) + n H(+)(out). Its function is as follows. NDH shuttles electrons from NAD(P)H:plastoquinone, via FMN and iron-sulfur (Fe-S) centers, to quinones in the photosynthetic chain and possibly in a chloroplast respiratory chain. The immediate electron acceptor for the enzyme in this species is believed to be plastoquinone. Couples the redox reaction to proton translocation, and thus conserves the redox energy in a proton gradient. The sequence is that of NAD(P)H-quinone oxidoreductase subunit I, chloroplastic from Chaetymenia peduncularis (Daisy).